An 874-amino-acid polypeptide reads, in one-letter code: Alanine--tRNA ligase (874 aa).

Zn(2+)-binding residues include H562, H566, C665, and H669.

The protein belongs to the class-II aminoacyl-tRNA synthetase family. Zn(2+) serves as cofactor.

The protein localises to the cytoplasm. The enzyme catalyses tRNA(Ala) + L-alanine + ATP = L-alanyl-tRNA(Ala) + AMP + diphosphate. In terms of biological role, catalyzes the attachment of alanine to tRNA(Ala) in a two-step reaction: alanine is first activated by ATP to form Ala-AMP and then transferred to the acceptor end of tRNA(Ala). Also edits incorrectly charged Ser-tRNA(Ala) and Gly-tRNA(Ala) via its editing domain. This Pseudomonas aeruginosa (strain ATCC 15692 / DSM 22644 / CIP 104116 / JCM 14847 / LMG 12228 / 1C / PRS 101 / PAO1) protein is Alanine--tRNA ligase.